The chain runs to 370 residues: Queuine tRNA-ribosyltransferase (370 aa).

The Proton acceptor role is filled by D89. Substrate is bound by residues 89-93 (DSGGF), D143, Q185, and G212. The segment at 243-249 (GVGKPED) is RNA binding. The active-site Nucleophile is D262. Residues 267–271 (TRNAR) are RNA binding; important for wobble base 34 recognition. C300, C302, C305, and H331 together coordinate Zn(2+).

It belongs to the queuine tRNA-ribosyltransferase family. As to quaternary structure, homodimer. Within each dimer, one monomer is responsible for RNA recognition and catalysis, while the other monomer binds to the replacement base PreQ1. It depends on Zn(2+) as a cofactor.

It catalyses the reaction 7-aminomethyl-7-carbaguanine + guanosine(34) in tRNA = 7-aminomethyl-7-carbaguanosine(34) in tRNA + guanine. The protein operates within tRNA modification; tRNA-queuosine biosynthesis. Functionally, catalyzes the base-exchange of a guanine (G) residue with the queuine precursor 7-aminomethyl-7-deazaguanine (PreQ1) at position 34 (anticodon wobble position) in tRNAs with GU(N) anticodons (tRNA-Asp, -Asn, -His and -Tyr). Catalysis occurs through a double-displacement mechanism. The nucleophile active site attacks the C1' of nucleotide 34 to detach the guanine base from the RNA, forming a covalent enzyme-RNA intermediate. The proton acceptor active site deprotonates the incoming PreQ1, allowing a nucleophilic attack on the C1' of the ribose to form the product. After dissociation, two additional enzymatic reactions on the tRNA convert PreQ1 to queuine (Q), resulting in the hypermodified nucleoside queuosine (7-(((4,5-cis-dihydroxy-2-cyclopenten-1-yl)amino)methyl)-7-deazaguanosine). The protein is Queuine tRNA-ribosyltransferase of Hydrogenovibrio crunogenus (strain DSM 25203 / XCL-2) (Thiomicrospira crunogena).